The primary structure comprises 802 residues: Epithelial sodium channel subunit delta (802 aa).

The Cytoplasmic segment spans residues 1–250 (MRAVLSQKTT…CSRGNRLKTT (250 aa)). Residues 145 to 211 (KQPHGGALTS…PPPPKEGHQE (67 aa)) are disordered. The span at 166–176 (CHLKGWQHRPT) shows a compositional bias: basic residues. A compositionally biased stretch (pro residues) spans 192-205 (PPRPGPPSAPPPPP). A helical transmembrane segment spans residues 251-271 (SWGLLSLGALVALCWQLGLLF). Over 272 to 694 (ERHWHRPVLM…VPQLLSAMGS (423 aa)) the chain is Extracellular. N-linked (GlcNAc...) asparagine glycans are attached at residues Asn330 and Asn548. A helical transmembrane segment spans residues 695 to 715 (LCSLWFGASVLSLLELLELLL). Topologically, residues 716 to 802 (DASALTLVLG…GPQPLETLDT (87 aa)) are cytoplasmic. The tract at residues 738–777 (RASPASGASSIKPEASQMPPPAGGTSDDPEPSGPHLPRVM) is disordered.

The protein belongs to the amiloride-sensitive sodium channel (TC 1.A.6) family. SCNN1D subfamily. As to quaternary structure, can form an alternative heterotrimeric epithelial sodium channel (ENaC), composed of a delta (SCNN1D), beta (SCNN1B), and gamma (SCNN1G) subunit, where the delta (SCNN1D) subunit replaces the alpha (SCNN1A) subunit. Not specifically expressed in epithelial cells.

The protein resides in the apical cell membrane. It catalyses the reaction Na(+)(in) = Na(+)(out). Its activity is regulated as follows. Originally identified and characterized by its inhibition by the diuretic drug amiloride. Its function is as follows. Potential alternative pore-forming subunit of the epithelial sodium channel (ENaC), capable of replacing the alpha/SCNN1A subunit, creating a more active channel with distinct properties. ENaC functions in epithelial tissues, where it facilitates the electrodiffusion of sodium ions from the extracellular fluid through the apical membrane of cells, with water following osmotically, regulating sodium balance and fluid homeostasis. This subunit could also function independently as a sodium channel or assemble into other tissue-specific heterotrimeric sodium channels. In terms of biological role, ENaC channels including this isoform exhibit greater conductance. In Homo sapiens (Human), this protein is Epithelial sodium channel subunit delta.